The primary structure comprises 688 residues: Protein sel-1 homolog 2 (688 aa).

The signal sequence occupies residues Met-1–Thr-18. At Lys-19–Thr-662 the chain is on the extracellular side. Asn-34 is a glycosylation site (N-linked (GlcNAc...) asparagine). Sel1-like repeat units follow at residues Gly-107–Asn-142, Leu-143–Ser-178, Tyr-179–Ser-214, Met-215–Ala-250, Val-297–Ser-333, Ala-334–Asn-370, Ala-371–Trp-406, Pro-407–Gln-442, Pro-443–His-478, Ala-551–His-586, and Ala-588–Pro-623. A glycan (N-linked (GlcNAc...) asparagine) is linked at Asn-162. The helical transmembrane segment at Val-663–Leu-683 threads the bilayer. Over Arg-684–Arg-688 the chain is Cytoplasmic.

Belongs to the sel-1 family.

The protein resides in the membrane. It is found in the cell projection. Its subcellular location is the cilium. The protein localises to the nucleus speckle. This Mus musculus (Mouse) protein is Protein sel-1 homolog 2 (Sel1l2).